The sequence spans 1149 residues: Transforming acidic coiled-coil-containing protein 2 (1149 aa).

Disordered regions lie at residues 1 to 73 (MGNE…GSNQ), 91 to 227 (SASP…ASSG), and 247 to 430 (PCSA…VPLT). Residues 13–35 (TSSVQSPRSLQPPGKSQSLQKQQ) show a composition bias toward polar residues. Residues 91-106 (SASPSAARASPAPLAP) show a composition bias toward low complexity. Ser100 is modified (phosphoserine). Residues 155–180 (KAPPAPPPPPPEVTPEPEVIDPPAPE) are compositionally biased toward pro residues. At Ser265 the chain carries Phosphoserine. Composition is skewed to polar residues over residues 267-284 (ESVP…SLQA) and 300-317 (TLTT…SSTL). Residues 318–334 (KRTKKTRPPSLKKKQAT) show a composition bias toward basic residues. The residue at position 354 (Ser354) is a Phosphoserine. The span at 358 to 368 (SEEHLAPETKT) shows a compositional bias: basic and acidic residues. Ser419 carries the phosphoserine modification. Position 439 is a phosphothreonine (Thr439). Residues 463–617 (SEDKGSWESQ…PAKKKKTPLK (155 aa)) are disordered. The span at 481–498 (KIGKKPVAKMPLRRPKMK) shows a compositional bias: basic residues. Residues 508 to 596 (PASPPRSPTE…SPASFEIPAS (89 aa)) form the SPAZ domain. Residues Ser510 and Ser514 each carry the phosphoserine modification. Position 516 is a phosphothreonine (Thr516). Residues 541 to 561 (NPFSSTSKMQESPKLSQQSYN) are compositionally biased toward polar residues. Phosphoserine is present on residues Ser552, Ser582, Ser585, Ser587, and Ser596. Residues 575–590 (KASSKTPSSPSKSPAS) are compositionally biased toward low complexity. A phosphothreonine mark is found at Thr632, Thr653, and Thr657. Disordered stretches follow at residues 636-665 (KKSP…SAIS) and 696-719 (DFPQ…SEEL). The segment covering 652–665 (PTPAATPEAPSAIS) has biased composition (low complexity). Positions 701 to 716 (SDLSNFVNETKFNSPS) are enriched in polar residues. Ser714 and Ser736 each carry phosphoserine. Thr755 carries the phosphothreonine modification. A disordered region spans residues 756 to 780 (PQESPVKSPPVRMSDSPTPCSGSSF). Phosphoserine is present on residues Ser759 and Ser771. Residues 770–780 (DSPTPCSGSSF) show a composition bias toward polar residues. Coiled-coil stretches lie at residues 877 to 905 (AQKL…LASR) and 948 to 1148 (DLDS…KMGK).

It belongs to the TACC family. Interacts with microtubules. Interacts with YEATS4, GCN5L2 and PCAF. Interacts with CCDC100/CEP120. Post-translationally, phosphorylated; which is required for localization in centrosome. In terms of tissue distribution, expressed in brain, kidney, lung, thymus and ovary. Not detectable in normal tissues at protein level.

It localises to the cytoplasm. Its subcellular location is the nucleus. The protein resides in the cytoskeleton. It is found in the microtubule organizing center. The protein localises to the centrosome. In terms of biological role, plays a role in the microtubule-dependent coupling of the nucleus and the centrosome. Involved in the processes that regulate centrosome-mediated interkinetic nuclear migration (INM) of neural progenitors. May play a role in organizing centrosomal microtubules. This chain is Transforming acidic coiled-coil-containing protein 2 (Tacc2), found in Mus musculus (Mouse).